The chain runs to 90 residues: Arminin 7722 (90 aa).

Positions Met1–Ala18 are cleaved as a signal peptide. A propeptide spanning residues Arg19–Ala59 is cleaved from the precursor. Thr87 carries the threonine amide modification.

It belongs to the arminin family. As to expression, expressed in entodermal epithelium along the body column.

It localises to the secreted. The protein resides in the target cell membrane. Functionally, antimicrobial peptide with a broad-spectrum antimicrobial activity. Keeps its antibacterial activity under a wide range of salt concentrations that mimic physiological conditions of human blood, which is surprising, since Hydra is an obligate freshwater animal with nearly no salt tolerance. Does not affect red blood cells. In Hydra vulgaris (Hydra), this protein is Arminin 7722.